The following is a 164-amino-acid chain: Low molecular weight protein-tyrosine-phosphatase (164 aa).

Cys-9 functions as the Nucleophile in the catalytic mechanism. Residue Arg-15 is part of the active site. The active-site Proton donor is the Asp-128.

Belongs to the low molecular weight phosphotyrosine protein phosphatase family.

The enzyme catalyses O-phospho-L-tyrosyl-[protein] + H2O = L-tyrosyl-[protein] + phosphate. Its function is as follows. Acts on tyrosine phosphorylated proteins, low-MW aryl phosphates and natural and synthetic acyl phosphates. May be involved in the regulation of sulfur amino acid metabolism. The chain is Low molecular weight protein-tyrosine-phosphatase (ptpA) from Streptomyces coelicolor (strain ATCC BAA-471 / A3(2) / M145).